Reading from the N-terminus, the 641-residue chain is MTVSKILKQIIDSQTTKNVVIGQLGLGSITKLKQLITLLAHHKDKQLTLKLFVDISDTSGILLANEELTTLLCPQGSISLTAIEGCQRVIVSNCKLTIDFYLGQYLTQLQALPMVNDGFVDGWHVTSDADQTQLRQILFWQLAKLSKNDAQFSLDDTFTEVSQLELYTQAEQVGLYRYADNIPGNIQSGDEICFQERAAMRAQSRALQAPYPICSAAVTTHATCSNLGIAIIGGGVASACLALSLAERGQQVTLFCEDHALAQAASGNKQGAIYPLLTPDNNTLSQYFQQAYLFSLQRLKSLAAQGHPIDFDLCGVVHTGHDERSRKRVAKIINGQNWQPSIARAITAEQASSIAGLKIDDGGIFYPMGGWVSPQDFTRAAFNQAKAIAGASLKLNTQITDIHYKDGGWELTSNTERFGSFKALILANGKSITQFPQTQYLQATGFRGQVSHVPSRAKLSKLSSVLCAHGYMTPSNNTLHCLGASYVKNAPNTDYCPNEQVENLHKIQHSYVGQEWVEDIDVSGHSARVGVRMVTRDHAPMMGPAPDIDSIMTLYQDHQLTPQSRKYWQSHNAPVHQGLYVLGGLGSRGLSSGPLAAESLAAQICGDLMPISRDFVALLNPNRMWMRKLLKGKALEVGVEV.

A tRNA (mnm(5)s(2)U34)-methyltransferase region spans residues methionine 1–threonine 219. Residues isoleucine 232–valine 641 are FAD-dependent cmnm(5)s(2)U34 oxidoreductase.

This sequence in the N-terminal section; belongs to the methyltransferase superfamily. tRNA (mnm(5)s(2)U34)-methyltransferase family. It in the C-terminal section; belongs to the DAO family. FAD is required as a cofactor.

Its subcellular location is the cytoplasm. It carries out the reaction 5-aminomethyl-2-thiouridine(34) in tRNA + S-adenosyl-L-methionine = 5-methylaminomethyl-2-thiouridine(34) in tRNA + S-adenosyl-L-homocysteine + H(+). Its function is as follows. Catalyzes the last two steps in the biosynthesis of 5-methylaminomethyl-2-thiouridine (mnm(5)s(2)U) at the wobble position (U34) in tRNA. Catalyzes the FAD-dependent demodification of cmnm(5)s(2)U34 to nm(5)s(2)U34, followed by the transfer of a methyl group from S-adenosyl-L-methionine to nm(5)s(2)U34, to form mnm(5)s(2)U34. The sequence is that of tRNA 5-methylaminomethyl-2-thiouridine biosynthesis bifunctional protein MnmC from Shewanella pealeana (strain ATCC 700345 / ANG-SQ1).